A 207-amino-acid polypeptide reads, in one-letter code: Outer-membrane lipoprotein LolB (207 aa).

An N-terminal signal peptide occupies residues methionine 1–alanine 21. The N-palmitoyl cysteine moiety is linked to residue cysteine 22. Cysteine 22 carries S-diacylglycerol cysteine lipidation.

This sequence belongs to the LolB family. Monomer.

It is found in the cell outer membrane. In terms of biological role, plays a critical role in the incorporation of lipoproteins in the outer membrane after they are released by the LolA protein. The chain is Outer-membrane lipoprotein LolB from Yersinia pseudotuberculosis serotype IB (strain PB1/+).